The following is a 561-amino-acid chain: Oxygen-dependent choline dehydrogenase (561 aa).

6–35 (DYIIIGAGSAGNVLATRLTEDADVSVLLLE) contributes to the FAD binding site. Residue His-475 is the Proton acceptor of the active site.

The protein belongs to the GMC oxidoreductase family. FAD serves as cofactor.

It catalyses the reaction choline + A = betaine aldehyde + AH2. It carries out the reaction betaine aldehyde + NAD(+) + H2O = glycine betaine + NADH + 2 H(+). It functions in the pathway amine and polyamine biosynthesis; betaine biosynthesis via choline pathway; betaine aldehyde from choline (cytochrome c reductase route): step 1/1. Involved in the biosynthesis of the osmoprotectant glycine betaine. Catalyzes the oxidation of choline to betaine aldehyde and betaine aldehyde to glycine betaine at the same rate. This Pseudomonas aeruginosa (strain UCBPP-PA14) protein is Oxygen-dependent choline dehydrogenase.